A 257-amino-acid chain; its full sequence is Imidazole glycerol phosphate synthase subunit HisF (257 aa).

Active-site residues include aspartate 11 and aspartate 130.

The protein belongs to the HisA/HisF family. In terms of assembly, heterodimer of HisH and HisF.

It is found in the cytoplasm. The enzyme catalyses 5-[(5-phospho-1-deoxy-D-ribulos-1-ylimino)methylamino]-1-(5-phospho-beta-D-ribosyl)imidazole-4-carboxamide + L-glutamine = D-erythro-1-(imidazol-4-yl)glycerol 3-phosphate + 5-amino-1-(5-phospho-beta-D-ribosyl)imidazole-4-carboxamide + L-glutamate + H(+). Its pathway is amino-acid biosynthesis; L-histidine biosynthesis; L-histidine from 5-phospho-alpha-D-ribose 1-diphosphate: step 5/9. Functionally, IGPS catalyzes the conversion of PRFAR and glutamine to IGP, AICAR and glutamate. The HisF subunit catalyzes the cyclization activity that produces IGP and AICAR from PRFAR using the ammonia provided by the HisH subunit. This Bradyrhizobium diazoefficiens (strain JCM 10833 / BCRC 13528 / IAM 13628 / NBRC 14792 / USDA 110) protein is Imidazole glycerol phosphate synthase subunit HisF.